A 142-amino-acid chain; its full sequence is Hemoglobin subunit alpha (142 aa).

A Globin domain is found at 2–142 (VLSSADKNNV…VSTVLTSKYR (141 aa)). Residue Ser4 is modified to Phosphoserine. An N6-succinyllysine mark is found at Lys8 and Lys12. At Lys17 the chain carries N6-acetyllysine; alternate. At Lys17 the chain carries N6-succinyllysine; alternate. Tyr25 carries the phosphotyrosine modification. Ser36 carries the phosphoserine modification. Lys41 carries the N6-succinyllysine modification. Ser50 is subject to Phosphoserine. His59 is a binding site for O2. A heme b-binding site is contributed by His88. Ser103 carries the phosphoserine modification. At Thr109 the chain carries Phosphothreonine. Ser125 bears the Phosphoserine mark. Phosphothreonine occurs at positions 135 and 138. Position 139 is a phosphoserine (Ser139).

The protein belongs to the globin family. As to quaternary structure, heterotetramer of two alpha chains and two beta chains. Red blood cells.

Functionally, involved in oxygen transport from the lung to the various peripheral tissues. In terms of biological role, hemopressin acts as an antagonist peptide of the cannabinoid receptor CNR1. Hemopressin-binding efficiently blocks cannabinoid receptor CNR1 and subsequent signaling. The sequence is that of Hemoglobin subunit alpha (HBA) from Panthera onca (Jaguar).